A 427-amino-acid chain; its full sequence is MTAIIDIIGREILDSRGNPTVEVDVVLEDGALGRAAVPSGASTGAHEAVELRDGDKARYLGKGVTKAVGAVNGEIFEALSGLDVEQQAQIDQIMIDLDGTPNKSRLGANAILGVSLACAKAAANSLDMPLYRYVGGTSARLLPVPMMNIINGGVHADNPIDFQEFMILPVGASSFAEGLRYGAEVFHTLKSELKKAGHNTNVGDEGGFAPNLPSADAALEFVMNAIGKAGFKAGSDIVIGLDCASTEFFKDGKYVYEGEGKTRSISEQAKYLADLVARYPIVTIEDGMSEDDMDGWKELTDLIGKKCQLVGDDLFVTNVKRLAEGIKAGRANSILIKVNQIGTLTETLAAVEMAHKAGYTSVMSHRSGETEDSTIADLAVATNCGQIKTGSLARSDRTAKYNQLLRIEQQLGKQALYGGKAALKALA.

Residue Q163 coordinates (2R)-2-phosphoglycerate. E205 (proton donor) is an active-site residue. Residues D242, E285, and D312 each coordinate Mg(2+). Positions 337, 366, 367, and 388 each coordinate (2R)-2-phosphoglycerate. K337 functions as the Proton acceptor in the catalytic mechanism.

Belongs to the enolase family. The cofactor is Mg(2+).

The protein localises to the cytoplasm. Its subcellular location is the secreted. It is found in the cell surface. The enzyme catalyses (2R)-2-phosphoglycerate = phosphoenolpyruvate + H2O. It functions in the pathway carbohydrate degradation; glycolysis; pyruvate from D-glyceraldehyde 3-phosphate: step 4/5. In terms of biological role, catalyzes the reversible conversion of 2-phosphoglycerate (2-PG) into phosphoenolpyruvate (PEP). It is essential for the degradation of carbohydrates via glycolysis. The polypeptide is Enolase (Bradyrhizobium diazoefficiens (strain JCM 10833 / BCRC 13528 / IAM 13628 / NBRC 14792 / USDA 110)).